The following is a 279-amino-acid chain: Nitrate import permease protein NrtB (279 aa).

Transmembrane regions (helical) follow at residues 25 to 45 (FLPYVVCLPIFLAIWQVISAI), 91 to 111 (VAIGYLLAACTGILVGGVLGM), 149 to 169 (AIFVIFITAIWPIIINTAVGI), 200 to 220 (VPYVFAGLRIAVGLAWLAIVA), and 249 to 269 (IILAIFYVGLVGLSLDRLVAW). Residues 84–267 (ILISLQRVAI…LVGLSLDRLV (184 aa)) enclose the ABC transmembrane type-1 domain.

The protein belongs to the binding-protein-dependent transport system permease family. CysTW subfamily. In terms of assembly, the complex is composed of two ATP-binding proteins (NrtC and NrtD), two transmembrane proteins (NrtB) and a solute-binding protein (NrtA).

It localises to the cell inner membrane. Part of the ABC transporter complex NrtABCD involved in nitrate uptake. The complex is probably also involved in nitrite transport. Probably responsible for the translocation of the substrate across the membrane. In Synechococcus elongatus (strain ATCC 33912 / PCC 7942 / FACHB-805) (Anacystis nidulans R2), this protein is Nitrate import permease protein NrtB.